The primary structure comprises 1473 residues: NACHT, LRR and PYD domains-containing protein 1 (1473 aa).

In terms of domain architecture, Pyrin spans 1–92; the sequence is MAGGAWGRLA…CAQAQEGAGH (92 aa). Residues 90-113 are disordered; that stretch reads AGHSPSFPYSPSEPHLGSPSQPTS. Phosphoserine; by MAPK11 and MAPK14 occurs at positions 93, 99, and 101. A Phosphoserine; by MAPK14 modification is found at Ser-107. The ZAKalpha motif 1 motif lies at 111 to 117; it reads PTSTAVL. Thr-112 is modified (phosphothreonine; by MAPK11, MAPK14 and MAP3K20). Ser-113 carries the phosphoserine; by MAP3K20 modification. Residues Thr-114 and Thr-129 each carry the phosphothreonine; by MAP3K20 modification. A Phosphoserine; by MAP3K20 modification is found at Ser-132. The segment at 160–254 is disordered; that stretch reads LPSSPDHESP…HTSLQPHHHP (95 aa). Ser-163 bears the Phosphoserine; by MAPK14 mark. Phosphoserine; by MAPK11 and MAPk14 is present on Ser-168. The residue at position 170 (Ser-170) is a Phosphoserine; by MAPK11 and MAPK14. The span at 170-182 shows a compositional bias: polar residues; sequence SQESPNAPTSTAV. Residue Ser-173 is modified to Phosphoserine; by MAPK11. A ZAKalpha motif 2 motif is present at residues 177–183; sequence PTSTAVL. Thr-178 carries the phosphothreonine; by MAPK11 modification. Position 179 is a phosphoserine; by MAPK11 and MAP3K20 (Ser-179). At Thr-180 the chain carries Phosphothreonine; by MAPK11 and MAP3K20. Basic and acidic residues predominate over residues 218 to 231; the sequence is EIREREREKSEKGR. Residues 328 to 637 form the NACHT domain; the sequence is RIVILQGAAG…EFFAAMSYVL (310 aa). Residue 334-341 coordinates ATP; sequence GAAGIGKS. LRR repeat units follow at residues 809 to 830, 838 to 858, 866 to 887, 895 to 915, 923 to 944, and 950 to 973; these read NLKE…SLCK, LLET…KDLA, TLTE…HLCQ, KLQR…QDLA, SLKE…LLCE, and ACKL…ELRA. Positions 991–1017 are disordered; sequence VMTPTEGLDTGEMSNSTSSLKRQRLGS. Residues 1079 to 1212 form a ZU5 region; sequence FWGPTGPVAT…HHIVLENPSF (134 aa). In terms of domain architecture, FIIND spans 1079–1364; it reads FWGPTGPVAT…LMPATTLIPP (286 aa). Positions 1213–1364 are UPA; it reads SPLGVLLKMI…LMPATTLIPP (152 aa). Residues 1374–1463 form the CARD domain; that stretch reads DAPQLLHFVD…HLIMELWEKG (90 aa).

The protein belongs to the NLRP family. In terms of assembly, interacts (via LRR repeats) with BCL2 and BCL2L1 (via the loop between motifs BH4 and BH3); these interactions reduce NLRP1 inflammasome-induced CASP1 activation and IL1B release, possibly by impairing NLRP1 interaction with PYCARD. Interacts with NOD2; this interaction is enhanced in the presence of muramyl dipeptide (MDP) and increases IL1B release. Interacts with EIF2AK2/PKR; this interaction requires EIF2AK2 activity, is accompanied by EIF2AK2 autophosphorylation and promotes inflammasome assembly in response to danger-associated signals. Interacts with MEFV; this interaction targets NLRP1 to degradation by autophagy, hence preventing excessive IL1B- and IL18-mediated inflammation. Binds (via LRR domain) to dsDNA and dsRNA. Interacts with DPP9; leading to inhibit activation of the inflammasome. DPP9 acts via formation of a ternary complex, composed of a DPP9 homodimer, one full-length NLRP1 protein, and one cleaved C-terminus of NLRP1 (NACHT, LRR and PYD domains-containing protein 1, C-terminus). Interacts with DPP8; leading to inhibit activation of the inflammasome, probably via formation of a ternary complex with DPP8. As to quaternary structure, interacts with the C-terminal part of NLRP1 (NACHT, LRR and PYD domains-containing protein 1, C-terminus) in absence of pathogens and other damage-associated signals. Interacts with the N-terminal part of NLRP1 (NACHT, LRR and PYD domains-containing protein 1, N-terminus) in absence of pathogens and other damage-associated signals. Homomultimer; forms the NLRP1 inflammasome polymeric complex, a filament composed of homopolymers of this form in response to pathogens and other damage-associated signals. The NLRP1 inflammasome polymeric complex associates with PYCARD/ASC. Interacts (via CARD domain) with PYCARD/ASC (via CARD domain); leading to pro-caspase-1 (proCASP1) recruitment. Pro-caspase-1 (proCASP1) filament formation increases local enzyme concentration, resulting in trans-autocleavage and activation. Active CASP1 then processes IL1B and IL18 precursors, leading to the release of mature cytokines in the extracellular milieu and inflammatory response. In terms of assembly, (Microbial infection) Interacts with vaccinia virus protein F1. As to quaternary structure, (Microbial infection) Interacts with human herpes virus 8/HHV-8 proteins ORF45; relieving autoinhibition of the NLRP1 inflammasome. Autocatalytically cleaved. Autocatalytic cleavage in FIIND region occurs constitutively, prior to activation signals, and is required for inflammasome activity (IL1B release), possibly by facilitating CASP1 binding. Both N- and C-terminal parts remain associated non-covalently. In terms of processing, ubiquitinated by the cullin:ZER1/ZYG11B complex in response to pathogen-associated signals, leading to its degradation by the proteasome and subsequent release of the cleaved C-terminal part of the protein (NACHT, LRR and PYD domains-containing protein 1, C-terminus), which polymerizes and forms the NLRP1 inflammasome. Post-translationally, phosphorylated by MAP3K20 isoform ZAKalpha, MAPK11 and MAPK14 in response to UV-B irradiation and ribosome collisions, promoting activation of the NLRP1 inflammasome and pyroptosis. (Microbial infection) Cleaved between Gln-130 and Gly-131 by the Protease 3C from various human enteroviruses and rhinoviruses (EV68, EV71, Coxsackievirus B3, HRV-14 and HRV-16). This cleavage triggers N-glycine-mediated proteasomal degradation of the autoinhibitory NLRP1 N-terminal fragment via the cullin:ZER1/ZYG11B complex which liberates the activating C-terminal fragment and activates NLRP1 inflammasome. In terms of processing, (Microbial infection) Cleaved between Gln-333 and Gly-334 by the 3C-like proteinase nsp5 from human coronavirus SARS-CoV-2. This cleavage liberates the activating C-terminal fragment and activates NLRP1 inflammasome, leading to downstream activation of GSDME and lung epithelial cell death. In terms of tissue distribution, widely expressed. Abundantly expressed in primary immune cells (isoform 1 and isoform 2), including in neutrophils, monocytes/macrophages, dendritic cells (mostly Langerhans cells), and B- and T-lymphocytes (at protein level). Strongly expressed in epithelial cells lining the glandular epithelium, such as that of the gastrointestinal tract (stomach, small intestine, colon), the respiratory tract (trachea and bronchi), and the endometrial and endocervical glands, gallbladder, prostate, and breast (at protein level). In testis, expressed in spermatogonia and primary spermatocytes, but not in Sertoli cells (at protein level). In the brain, expressed in neurons, in particular in pyramidal ones and in oligodendrocytes, but not detected in microglia (at protein level). Expressed in adult and fetal ocular tissues, including in adult and 24-week old fetal choroid, sclera, cornea, and optic nerve, as well as in adult retina and fetal retina/retinal pigment epithelium. Highly expressed in the skin throughout the epidermis and in dermal fibroblasts, in both glabrous skin and plantar skin. It is detected in keratinocytes, but not in melanocytes. Expressed in epidermal appendages such as hair follicles.

It is found in the cytoplasm. The protein localises to the cytosol. The protein resides in the nucleus. It localises to the inflammasome. It catalyses the reaction ATP + H2O = ADP + phosphate + H(+). With respect to regulation, NLRP1 inflammasome is activated by cleavage by the Protease 3C from various human enteroviruses and rhinoviruses (EV68, EV71, Coxsackievirus B3, HRV-14 and HRV-16): cleavage promotes ubiquitination and degradation of the N-terminal part, releasing the cleaved C-terminal part of the protein (NACHT, LRR and PYD domains-containing protein 1, C-terminus), which polymerizes and forms the NLRP1 inflammasome. Activated double-stranded RNA: positive-strand RNA viruses such as Semliki forest virus and long dsRNA activate the NLRP1 inflammasome. In contrast to its mouse ortholog, not activated by Bacillus anthracis lethal toxin. NLRP1 inflammasome is inhibited by DPP8 and DPP9, which sequester the C-terminal fragment of NLRP1 (NACHT, LRR and PYD domains-containing protein 1, C-terminus) in a ternary complex, thereby preventing NLRP1 oligomerization and activation. NLRP1 inflammasome is activated by Val-boroPro (Talabostat, PT-100), an inhibitor of dipeptidyl peptidases DPP8 and DPP9. Val-boroPro relieves inhibition of DPP8 and/or DPP9 by promoting disruption of the ternary complex, releasing its C-terminal part from autoinhibition. ATPase activity is activated by dsRNA-binding but not dsDNA-binding. (Microbial infection) The NLRP1 inflammasome is activated by human herpes virus 8/HHV-8 protein ORF45, which interacts with the N-terminal part of NLRP1 and promotes its translocation into the nucleus, relieving autoinhibition and leading to activation. Its activity is regulated as follows. (Microbial infection) NLRP1 inflammasome is activated by cleavage by the 3C-like proteinase nsp5 from human coronavirus SARS-CoV-2. In terms of biological role, acts as the sensor component of the NLRP1 inflammasome, which mediates inflammasome activation in response to various pathogen-associated signals, leading to subsequent pyroptosis. Inflammasomes are supramolecular complexes that assemble in the cytosol in response to pathogens and other damage-associated signals and play critical roles in innate immunity and inflammation. Acts as a recognition receptor (PRR): recognizes specific pathogens and other damage-associated signals, such as cleavage by some human enteroviruses and rhinoviruses, double-stranded RNA, UV-B irradiation, or Val-boroPro inhibitor, and mediates the formation of the inflammasome polymeric complex composed of NLRP1, CASP1 and PYCARD/ASC. In response to pathogen-associated signals, the N-terminal part of NLRP1 is degraded by the proteasome, releasing the cleaved C-terminal part of the protein (NACHT, LRR and PYD domains-containing protein 1, C-terminus), which polymerizes and associates with PYCARD/ASC to initiate the formation of the inflammasome complex: the NLRP1 inflammasome recruits pro-caspase-1 (proCASP1) and promotes caspase-1 (CASP1) activation, which subsequently cleaves and activates inflammatory cytokines IL1B and IL18 and gasdermin-D (GSDMD), leading to pyroptosis. In the absence of GSDMD expression, the NLRP1 inflammasome is able to recruit and activate CASP8, leading to activation of gasdermin-E (GSDME). Activation of NLRP1 inflammasome is also required for HMGB1 secretion; the active cytokines and HMGB1 stimulate inflammatory responses. Binds ATP and shows ATPase activity. Plays an important role in antiviral immunity and inflammation in the human airway epithelium. Specifically recognizes a number of pathogen-associated signals: upon infection by human rhinoviruses 14 and 16 (HRV-14 and HRV-16), NLRP1 is cleaved and activated which triggers NLRP1-dependent inflammasome activation and IL18 secretion. Positive-strand RNA viruses, such as Semliki forest virus and long dsRNA activate the NLRP1 inflammasome, triggering IL1B release in a NLRP1-dependent fashion. Acts as a direct sensor for long dsRNA and thus RNA virus infection. May also be activated by muramyl dipeptide (MDP), a fragment of bacterial peptidoglycan, in a NOD2-dependent manner. The NLRP1 inflammasome is also activated in response to UV-B irradiation causing ribosome collisions: ribosome collisions cause phosphorylation and activation of NLRP1 in a MAP3K20-dependent manner, leading to pyroptosis. Functionally, constitutes the precursor of the NLRP1 inflammasome, which mediates autoproteolytic processing within the FIIND domain to generate the N-terminal and C-terminal parts, which are associated non-covalently in absence of pathogens and other damage-associated signals. Regulatory part that prevents formation of the NLRP1 inflammasome: in absence of pathogens and other damage-associated signals, interacts with the C-terminal part of NLRP1 (NACHT, LRR and PYD domains-containing protein 1, C-terminus), preventing activation of the NLRP1 inflammasome. In response to pathogen-associated signals, this part is ubiquitinated and degraded by the proteasome, releasing the cleaved C-terminal part of the protein, which polymerizes and forms the NLRP1 inflammasome. Its function is as follows. Constitutes the active part of the NLRP1 inflammasome. In absence of pathogens and other damage-associated signals, interacts with the N-terminal part of NLRP1 (NACHT, LRR and PYD domains-containing protein 1, N-terminus), preventing activation of the NLRP1 inflammasome. In response to pathogen-associated signals, the N-terminal part of NLRP1 is degraded by the proteasome, releasing this form, which polymerizes and associates with PYCARD/ASC to form of the NLRP1 inflammasome complex: the NLRP1 inflammasome complex then directly recruits pro-caspase-1 (proCASP1) and promotes caspase-1 (CASP1) activation, leading to gasdermin-D (GSDMD) cleavage and subsequent pyroptosis. In terms of biological role, it is unclear whether is involved in inflammasome formation. It is not cleaved within the FIIND domain, does not assemble into specks, nor promote IL1B release. However, in an vitro cell-free system, it has been shown to be activated by MDP. This is NACHT, LRR and PYD domains-containing protein 1 from Homo sapiens (Human).